The sequence spans 1313 residues: Inter-alpha-trypsin inhibitor heavy chain H6 (1313 aa).

An N-terminal signal peptide occupies residues 1–23 (MSGWRYLICVSFLLTILLELTYQ). In terms of domain architecture, VIT spans 24–150 (GPPVPASSST…EVTFSLAYEE (127 aa)). 4 N-linked (GlcNAc...) asparagine glycosylation sites follow: Asn83, Asn374, Asn540, and Asn594. Residues 283-469 (NVVFVIDVSS…LQLKGLYEEI (187 aa)) form the VWFA domain. Disordered regions lie at residues 612-644 (QPKQ…HGLG), 783-817 (HSKP…TLQV), 856-928 (LKPS…EPLP), and 959-983 (PSRP…SPPN). Over residues 623–640 (QTSTSAGPDTIMPSSSSR) the composition is skewed to polar residues. Over residues 864 to 875 (QISTSISLSKPE) the composition is skewed to polar residues. Over residues 876–888 (TPNPHMPQTPLPP) the composition is skewed to pro residues. The segment covering 907-921 (TISSSTGPSSTTTTS) has biased composition (low complexity). Asn971 and Asn1231 each carry an N-linked (GlcNAc...) asparagine glycan.

Belongs to the ITIH family.

It localises to the secreted. This Homo sapiens (Human) protein is Inter-alpha-trypsin inhibitor heavy chain H6 (ITIH6).